A 268-amino-acid polypeptide reads, in one-letter code: Glucosamine-6-phosphate deaminase (268 aa).

Asp-72 functions as the Proton acceptor; for enolization step in the catalytic mechanism. Asp-141 serves as the catalytic For ring-opening step. The active-site Proton acceptor; for ring-opening step is His-143. The active-site For ring-opening step is Glu-148.

Belongs to the glucosamine/galactosamine-6-phosphate isomerase family. NagB subfamily.

The enzyme catalyses alpha-D-glucosamine 6-phosphate + H2O = beta-D-fructose 6-phosphate + NH4(+). Its pathway is amino-sugar metabolism; N-acetylneuraminate degradation; D-fructose 6-phosphate from N-acetylneuraminate: step 5/5. Allosterically activated by N-acetylglucosamine 6-phosphate (GlcNAc6P). Catalyzes the reversible isomerization-deamination of glucosamine 6-phosphate (GlcN6P) to form fructose 6-phosphate (Fru6P) and ammonium ion. This is Glucosamine-6-phosphate deaminase from Borrelia garinii subsp. bavariensis (strain ATCC BAA-2496 / DSM 23469 / PBi) (Borreliella bavariensis).